The chain runs to 551 residues: E3 ubiquitin-protein ligase HEL1 (551 aa).

A TRIAD supradomain region spans residues 175-388; that stretch reads NDFTCIICCD…KNFFQCTMYK (214 aa). Residues C179, C182, C200, C203, C301, C304, H309, C314, C341, and C344 each coordinate Zn(2+). The RING-type 1 zinc-finger motif lies at 179–225; it reads CIICCDKKDTETFALECGHEYCINCYRHYIKDKLHEGNIITCMDCSL. The IBR-type zinc finger occupies 242 to 314; the sequence is SKLMDSSIKS…GFEVHSPADC (73 aa). The segment at 341-370 adopts an RING-type 2; atypical zinc-finger fold; that stretch reads CPKCSVNIEKNGGCNHMVCSSCKYEFCWIC. Residue C354 is part of the active site. The Zn(2+) site is built by C359, C362, C367, C370, H377, and C384.

It belongs to the RBR family. Interacts with the E2 ubiquitin-conjugating enzyme UBC4 and histones H3 and H4.

The enzyme catalyses [E2 ubiquitin-conjugating enzyme]-S-ubiquitinyl-L-cysteine + [acceptor protein]-L-lysine = [E2 ubiquitin-conjugating enzyme]-L-cysteine + [acceptor protein]-N(6)-ubiquitinyl-L-lysine.. Its pathway is protein modification; protein ubiquitination. Functionally, probable ubiquitin-protein ligase involved in the degradation-related ubiquitination of histones. Contributes to the post-translational regulation of histone protein levels by polyubiquitination of excess histones for subsequent degradation. This Saccharomyces cerevisiae (strain ATCC 204508 / S288c) (Baker's yeast) protein is E3 ubiquitin-protein ligase HEL1.